Reading from the N-terminus, the 329-residue chain is Cathepsin K (329 aa).

Positions 1–15 (MWGLKVLLLPVMSFA) are cleaved as a signal peptide. The propeptide at 16–114 (LYPEEILDTH…TLYIPDWEGR (99 aa)) is activation peptide. An N-linked (GlcNAc...) asparagine glycan is attached at asparagine 103. Intrachain disulfides connect cysteine 136/cysteine 177, cysteine 170/cysteine 210, and cysteine 269/cysteine 318. The active site involves cysteine 139. Catalysis depends on residues histidine 276 and asparagine 296.

This sequence belongs to the peptidase C1 family.

It localises to the lysosome. The protein localises to the secreted. Its subcellular location is the apical cell membrane. The catalysed reaction is Broad proteolytic activity. With small-molecule substrates and inhibitors, the major determinant of specificity is P2, which is preferably Leu, Met &gt; Phe, and not Arg.. Its function is as follows. Thiol protease involved in osteoclastic bone resorption and may participate partially in the disorder of bone remodeling. Displays potent endoprotease activity against fibrinogen at acid pH. May play an important role in extracellular matrix degradation. Involved in the release of thyroid hormone thyroxine (T4) by limited proteolysis of TG/thyroglobulin in the thyroid follicle lumen. The protein is Cathepsin K (CTSK) of Macaca fascicularis (Crab-eating macaque).